A 283-amino-acid chain; its full sequence is Thymidylate synthase (283 aa).

Position 22 (arginine 22) interacts with dUMP. Cysteine 160 acts as the Nucleophile in catalysis. DUMP-binding positions include 180-183, asparagine 191, and 221-223; these read RSCD and HIY. Aspartate 183 is a (6R)-5,10-methylene-5,6,7,8-tetrahydrofolate binding site. Serine 282 is a (6R)-5,10-methylene-5,6,7,8-tetrahydrofolate binding site.

Belongs to the thymidylate synthase family. Bacterial-type ThyA subfamily. As to quaternary structure, homodimer.

Its subcellular location is the cytoplasm. The enzyme catalyses dUMP + (6R)-5,10-methylene-5,6,7,8-tetrahydrofolate = 7,8-dihydrofolate + dTMP. The protein operates within pyrimidine metabolism; dTTP biosynthesis. Functionally, catalyzes the reductive methylation of 2'-deoxyuridine-5'-monophosphate (dUMP) to 2'-deoxythymidine-5'-monophosphate (dTMP) while utilizing 5,10-methylenetetrahydrofolate (mTHF) as the methyl donor and reductant in the reaction, yielding dihydrofolate (DHF) as a by-product. This enzymatic reaction provides an intracellular de novo source of dTMP, an essential precursor for DNA biosynthesis. This Vibrio vulnificus (strain YJ016) protein is Thymidylate synthase.